The following is a 203-amino-acid chain: Recombination protein RecR (203 aa).

A C4-type zinc finger spans residues 57 to 73 (CQSCGTLKSNSLGCNNC). Positions 81-175 (NKICVVEDIA…KVTKLAQGLP (95 aa)) constitute a Toprim domain.

Belongs to the RecR family.

In terms of biological role, may play a role in DNA repair. It seems to be involved in an RecBC-independent recombinational process of DNA repair. It may act with RecF and RecO. In Pelagibacter ubique (strain HTCC1062), this protein is Recombination protein RecR.